A 257-amino-acid chain; its full sequence is UPF0246 protein ECA3888 (257 aa).

This sequence belongs to the UPF0246 family.

This is UPF0246 protein ECA3888 from Pectobacterium atrosepticum (strain SCRI 1043 / ATCC BAA-672) (Erwinia carotovora subsp. atroseptica).